A 544-amino-acid polypeptide reads, in one-letter code: Chaperonin GroEL (544 aa).

Residues 29-32 (TLGP), Lys-50, 86-90 (DGTTT), Gly-415, and Asp-495 contribute to the ATP site.

Belongs to the chaperonin (HSP60) family. In terms of assembly, forms a cylinder of 14 subunits composed of two heptameric rings stacked back-to-back. Interacts with the co-chaperonin GroES.

It localises to the cytoplasm. The catalysed reaction is ATP + H2O + a folded polypeptide = ADP + phosphate + an unfolded polypeptide.. Functionally, together with its co-chaperonin GroES, plays an essential role in assisting protein folding. The GroEL-GroES system forms a nano-cage that allows encapsulation of the non-native substrate proteins and provides a physical environment optimized to promote and accelerate protein folding. This is Chaperonin GroEL from Tannerella forsythia (Bacteroides forsythus).